A 123-amino-acid polypeptide reads, in one-letter code: Small ribosomal subunit protein uS12 (123 aa).

Aspartate 89 is subject to 3-methylthioaspartic acid.

This sequence belongs to the universal ribosomal protein uS12 family. Part of the 30S ribosomal subunit. Contacts proteins S8 and S17. May interact with IF1 in the 30S initiation complex.

Its function is as follows. With S4 and S5 plays an important role in translational accuracy. In terms of biological role, interacts with and stabilizes bases of the 16S rRNA that are involved in tRNA selection in the A site and with the mRNA backbone. Located at the interface of the 30S and 50S subunits, it traverses the body of the 30S subunit contacting proteins on the other side and probably holding the rRNA structure together. The combined cluster of proteins S8, S12 and S17 appears to hold together the shoulder and platform of the 30S subunit. In Nitrobacter hamburgensis (strain DSM 10229 / NCIMB 13809 / X14), this protein is Small ribosomal subunit protein uS12.